The chain runs to 136 residues: Small ribosomal subunit protein eS17B (136 aa).

It belongs to the eukaryotic ribosomal protein eS17 family. Component of the small ribosomal subunit (SSU). Mature yeast ribosomes consist of a small (40S) and a large (60S) subunit. The 40S small subunit contains 1 molecule of ribosomal RNA (18S rRNA) and 33 different proteins (encoded by 57 genes). The large 60S subunit contains 3 rRNA molecules (25S, 5.8S and 5S rRNA) and 46 different proteins (encoded by 81 genes).

It is found in the cytoplasm. Component of the ribosome, a large ribonucleoprotein complex responsible for the synthesis of proteins in the cell. The small ribosomal subunit (SSU) binds messenger RNAs (mRNAs) and translates the encoded message by selecting cognate aminoacyl-transfer RNA (tRNA) molecules. The large subunit (LSU) contains the ribosomal catalytic site termed the peptidyl transferase center (PTC), which catalyzes the formation of peptide bonds, thereby polymerizing the amino acids delivered by tRNAs into a polypeptide chain. The nascent polypeptides leave the ribosome through a tunnel in the LSU and interact with protein factors that function in enzymatic processing, targeting, and the membrane insertion of nascent chains at the exit of the ribosomal tunnel. This Saccharomyces cerevisiae (strain ATCC 204508 / S288c) (Baker's yeast) protein is Small ribosomal subunit protein eS17B.